A 622-amino-acid polypeptide reads, in one-letter code: Chaperone protein HscA homolog (622 aa).

This sequence belongs to the heat shock protein 70 family.

Chaperone involved in the maturation of iron-sulfur cluster-containing proteins. Has a low intrinsic ATPase activity which is markedly stimulated by HscB. In Burkholderia mallei (strain NCTC 10247), this protein is Chaperone protein HscA homolog.